A 348-amino-acid chain; its full sequence is Protein RecA (348 aa).

Residue 66-73 (GPESSGKT) coordinates ATP.

This sequence belongs to the RecA family.

The protein localises to the cytoplasm. In terms of biological role, can catalyze the hydrolysis of ATP in the presence of single-stranded DNA, the ATP-dependent uptake of single-stranded DNA by duplex DNA, and the ATP-dependent hybridization of homologous single-stranded DNAs. It interacts with LexA causing its activation and leading to its autocatalytic cleavage. The sequence is that of Protein RecA from Neisseria meningitidis serogroup A / serotype 4A (strain DSM 15465 / Z2491).